Here is a 438-residue protein sequence, read N- to C-terminus: UDP-N-acetylmuramoylalanine--D-glutamate ligase (438 aa).

112-118 (GSNGKST) lines the ATP pocket.

Belongs to the MurCDEF family.

Its subcellular location is the cytoplasm. It catalyses the reaction UDP-N-acetyl-alpha-D-muramoyl-L-alanine + D-glutamate + ATP = UDP-N-acetyl-alpha-D-muramoyl-L-alanyl-D-glutamate + ADP + phosphate + H(+). It functions in the pathway cell wall biogenesis; peptidoglycan biosynthesis. Functionally, cell wall formation. Catalyzes the addition of glutamate to the nucleotide precursor UDP-N-acetylmuramoyl-L-alanine (UMA). The chain is UDP-N-acetylmuramoylalanine--D-glutamate ligase from Sodalis glossinidius (strain morsitans).